The sequence spans 418 residues: MNIIDDLKWRGAINQQTDEAGLKELTENQSVSLYCGIDPTGDSMHIGHLIPFMILKRFQLAGHHPYVVVGGGTGAIGDPSGKNSERKLQTMDQVKHNQDGLSAQMYKLFGHDENFSIVNNYDWLSKISLLDFLRDYGKLFSVNTMLNKEVVASRLEVGISYTEFTYQILQSVDFLHLYRAEHVQLQIGGADQWGNITAGTDLIHRLEGNDAKAYGLTIPLLLKADGTKFGKTAGGAVWLNPERTSPYEFYQFWINQDDRDVVKYLKYFTFLSHEEIDRLAETVKTAPEKREAQRRLAEEVTEFVHGKQAVVEAENITKALFTGDVQSLTADEIEQGFKGVPSADVSAEKQNIVLWLVDATKFEPSRRQAREDIKNGAIRINGEKVTDVEAEIDPSAAFNGKFVIVRRGKKRYFLAHVK.

An L-tyrosine-binding site is contributed by Y34. The short motif at 39 to 48 is the 'HIGH' region element; that stretch reads PTGDSMHIGH. 2 residues coordinate L-tyrosine: Y166 and Q170. The 'KMSKS' region motif lies at 228-232; the sequence is KFGKT. K231 provides a ligand contact to ATP. The 69-residue stretch at 350–418 folds into the S4 RNA-binding domain; that stretch reads QNIVLWLVDA…KKRYFLAHVK (69 aa).

Belongs to the class-I aminoacyl-tRNA synthetase family. TyrS type 1 subfamily. As to quaternary structure, homodimer.

It localises to the cytoplasm. The enzyme catalyses tRNA(Tyr) + L-tyrosine + ATP = L-tyrosyl-tRNA(Tyr) + AMP + diphosphate + H(+). Functionally, catalyzes the attachment of tyrosine to tRNA(Tyr) in a two-step reaction: tyrosine is first activated by ATP to form Tyr-AMP and then transferred to the acceptor end of tRNA(Tyr). The chain is Tyrosine--tRNA ligase from Lactiplantibacillus plantarum (strain ATCC BAA-793 / NCIMB 8826 / WCFS1) (Lactobacillus plantarum).